Here is a 417-residue protein sequence, read N- to C-terminus: Serine hydroxymethyltransferase (417 aa).

Lys-54 carries the post-translational modification N6-acetyllysine. Residues Leu-121 and 125 to 127 (GHL) contribute to the (6S)-5,6,7,8-tetrahydrofolate site. Lys-229 bears the N6-(pyridoxal phosphate)lysine mark. N6-acetyllysine occurs at positions 250, 285, and 354. Position 355 to 357 (355 to 357 (SPF)) interacts with (6S)-5,6,7,8-tetrahydrofolate. Lys-375 carries the N6-acetyllysine modification.

It belongs to the SHMT family. As to quaternary structure, homodimer. Requires pyridoxal 5'-phosphate as cofactor.

The protein localises to the cytoplasm. It carries out the reaction (6R)-5,10-methylene-5,6,7,8-tetrahydrofolate + glycine + H2O = (6S)-5,6,7,8-tetrahydrofolate + L-serine. Its pathway is one-carbon metabolism; tetrahydrofolate interconversion. The protein operates within amino-acid biosynthesis; glycine biosynthesis; glycine from L-serine: step 1/1. Its function is as follows. Catalyzes the reversible interconversion of serine and glycine with tetrahydrofolate (THF) serving as the one-carbon carrier. This reaction serves as the major source of one-carbon groups required for the biosynthesis of purines, thymidylate, methionine, and other important biomolecules. Also exhibits THF-independent aldolase activity toward beta-hydroxyamino acids, producing glycine and aldehydes, via a retro-aldol mechanism. The sequence is that of Serine hydroxymethyltransferase from Escherichia coli O1:K1 / APEC.